Reading from the N-terminus, the 215-residue chain is CUE domain-containing protein 4, mitochondrial (215 aa).

The transit peptide at 1–29 (MQPEQLAGCAVVLTVTVLTLRWMFRVDKG) directs the protein to the mitochondrion. Residues 48 to 90 (VNSEHVHLVKTVFPHLESSAIAYDLQKTKNVDATIENALRGQP) enclose the CUE domain. The disordered stretch occupies residues 109-191 (GAGASSHSEE…KEREELFRKR (83 aa)). 2 stretches are compositionally biased toward low complexity: residues 122–140 (SHEVTSNVSSGSSASSLAS) and 153–165 (SSRISSSDNSSSS). Residues 180–191 (SKKEREELFRKR) are compositionally biased toward basic and acidic residues.

It localises to the mitochondrion. The chain is CUE domain-containing protein 4, mitochondrial from Schizosaccharomyces pombe (strain 972 / ATCC 24843) (Fission yeast).